The sequence spans 253 residues: NAD(P)H-quinone oxidoreductase subunit K (253 aa).

[4Fe-4S] cluster is bound by residues C68, C69, C133, and C164.

This sequence belongs to the complex I 20 kDa subunit family. In terms of assembly, NDH-1 can be composed of about 15 different subunits; different subcomplexes with different compositions have been identified which probably have different functions. It depends on [4Fe-4S] cluster as a cofactor.

The protein localises to the cellular thylakoid membrane. The enzyme catalyses a plastoquinone + NADH + (n+1) H(+)(in) = a plastoquinol + NAD(+) + n H(+)(out). It catalyses the reaction a plastoquinone + NADPH + (n+1) H(+)(in) = a plastoquinol + NADP(+) + n H(+)(out). Functionally, NDH-1 shuttles electrons from an unknown electron donor, via FMN and iron-sulfur (Fe-S) centers, to quinones in the respiratory and/or the photosynthetic chain. The immediate electron acceptor for the enzyme in this species is believed to be plastoquinone. Couples the redox reaction to proton translocation, and thus conserves the redox energy in a proton gradient. Cyanobacterial NDH-1 also plays a role in inorganic carbon-concentration. In Synechococcus sp. (strain CC9311), this protein is NAD(P)H-quinone oxidoreductase subunit K.